A 156-amino-acid polypeptide reads, in one-letter code: ATP synthase subunit b (156 aa).

The chain crosses the membrane as a helical span at residues 5–25 (LTMIGQAIAFFIFVVFCMKYV).

The protein belongs to the ATPase B chain family. F-type ATPases have 2 components, F(1) - the catalytic core - and F(0) - the membrane proton channel. F(1) has five subunits: alpha(3), beta(3), gamma(1), delta(1), epsilon(1). F(0) has three main subunits: a(1), b(2) and c(10-14). The alpha and beta chains form an alternating ring which encloses part of the gamma chain. F(1) is attached to F(0) by a central stalk formed by the gamma and epsilon chains, while a peripheral stalk is formed by the delta and b chains.

It localises to the cell inner membrane. F(1)F(0) ATP synthase produces ATP from ADP in the presence of a proton or sodium gradient. F-type ATPases consist of two structural domains, F(1) containing the extramembraneous catalytic core and F(0) containing the membrane proton channel, linked together by a central stalk and a peripheral stalk. During catalysis, ATP synthesis in the catalytic domain of F(1) is coupled via a rotary mechanism of the central stalk subunits to proton translocation. In terms of biological role, component of the F(0) channel, it forms part of the peripheral stalk, linking F(1) to F(0). In Hahella chejuensis (strain KCTC 2396), this protein is ATP synthase subunit b.